Consider the following 984-residue polypeptide: Probable beta-galactosidase C (984 aa).

The signal sequence occupies residues 1 to 23; it reads MRLLSFIYLVWLALLTGTPQVSA. Residues Y82, N127, A128, E129, and N187 each coordinate substrate. The active-site Proton donor is E188. An N-linked (GlcNAc...) asparagine glycan is attached at N197. Residue Y251 participates in substrate binding. Residues C257 and C304 are joined by a disulfide bond. Residue N276 is glycosylated (N-linked (GlcNAc...) asparagine). E287 (nucleophile) is an active-site residue. Y353 is a binding site for substrate. N-linked (GlcNAc...) asparagine glycans are attached at residues N391, N421, N434, N517, N602, N677, N715, N720, N759, and N805.

It belongs to the glycosyl hydrolase 35 family.

The protein localises to the secreted. The enzyme catalyses Hydrolysis of terminal non-reducing beta-D-galactose residues in beta-D-galactosides.. Its function is as follows. Cleaves beta-linked terminal galactosyl residues from gangliosides, glycoproteins, and glycosaminoglycans. The chain is Probable beta-galactosidase C (lacC) from Aspergillus oryzae (strain ATCC 42149 / RIB 40) (Yellow koji mold).